A 91-amino-acid polypeptide reads, in one-letter code: Probable protein E5A (91 aa).

This sequence belongs to the papillomaviridae E5A protein family.

This is Probable protein E5A from Human papillomavirus type 6b.